The sequence spans 260 residues: Kallikrein-8 (260 aa).

The signal sequence occupies residues 1–28 (MGRPRPRAAKTWMFLLLLGGAWAGHSRA). The propeptide occupies 29-32 (QEDK). The 225-residue stretch at 33–257 (VLGGHECQPH…YLDWIKKIIG (225 aa)) folds into the Peptidase S1 domain. 6 disulfide bridges follow: Cys-39-Cys-173, Cys-58-Cys-74, Cys-145-Cys-246, Cys-152-Cys-218, Cys-184-Cys-198, and Cys-208-Cys-233. The Charge relay system role is filled by His-73. N-linked (GlcNAc...) asparagine glycosylation is present at Asn-110. Residue Asp-120 is the Charge relay system of the active site. The active-site Charge relay system is Ser-212.

It belongs to the peptidase S1 family. Kallikrein subfamily. Interacts with SPINK9. Isoform 1 is predominantly expressed in the pancreas. Isoform 2 is expressed in adult brain and hippocampus. Isoform 1 and isoform 2 are found in fetal brain and placenta. Detected in salivary gland, uterus, thymus, breast, testis and kidney but not in spleen, liver, lung or normal ovarian tissue. Displays an 11.5-fold increase in Alzheimer disease hippocampus compared to controls and is overexpressed in some ovarian carcinomas. Expressed at low levels in normal skin while high levels are found in psoriasis vulgaris, seborrheic keratosis, lichen planus and squamous cell carcinoma skin samples. Expressed in the keratinocytes.

It is found in the secreted. The protein localises to the cytoplasm. The catalysed reaction is Cleavage of amide substrates following the basic amino acids Arg or Lys at the P1 position, with a preference for Arg over Lys.. With respect to regulation, inhibited by a range of serine protease inhibitors including antipain, aprotinin, leupeptin, benzamidine and soybean trypsin inhibitor. Serine protease which is capable of degrading a number of proteins such as casein, fibrinogen, kininogen, fibronectin and collagen type IV. Also cleaves L1CAM in response to increased neural activity. Induces neurite outgrowth and fasciculation of cultured hippocampal neurons. Plays a role in the formation and maturation of orphan and small synaptic boutons in the Schaffer-collateral pathway, regulates Schaffer-collateral long-term potentiation in the hippocampus and is required for memory acquisition and synaptic plasticity. Involved in skin desquamation and keratinocyte proliferation. Plays a role in the secondary phase of pathogenesis following spinal cord injury. The sequence is that of Kallikrein-8 (KLK8) from Homo sapiens (Human).